The chain runs to 358 residues: tRNA N6-adenosine threonylcarbamoyltransferase (358 aa).

Fe cation is bound by residues His118 and His122. Residues 143–147, Asp176, Gly189, and Asn298 contribute to the substrate site; that span reads IVSGG. Asp326 contributes to the Fe cation binding site.

The protein belongs to the KAE1 / TsaD family. Fe(2+) serves as cofactor.

It localises to the cytoplasm. It carries out the reaction L-threonylcarbamoyladenylate + adenosine(37) in tRNA = N(6)-L-threonylcarbamoyladenosine(37) in tRNA + AMP + H(+). In terms of biological role, required for the formation of a threonylcarbamoyl group on adenosine at position 37 (t(6)A37) in tRNAs that read codons beginning with adenine. Is involved in the transfer of the threonylcarbamoyl moiety of threonylcarbamoyl-AMP (TC-AMP) to the N6 group of A37, together with TsaE and TsaB. TsaD likely plays a direct catalytic role in this reaction. This chain is tRNA N6-adenosine threonylcarbamoyltransferase, found in Rhodopirellula baltica (strain DSM 10527 / NCIMB 13988 / SH1).